Reading from the N-terminus, the 148-residue chain is Protein ORM1 (148 aa).

The next 4 helical transmembrane spans lie at W12–V32, W36–I56, F89–L109, and M111–T131.

It to yeast YLR350W C-terminus.

Its subcellular location is the membrane. This is Protein ORM1 (ORM1) from Saccharomyces pastorianus (strain ATCC 76670 / Carlsberg bottom yeast no.2 / CBS 1503 / CLIB 180 / NBRC 10610 / NRRL Y-1525) (Saaz-type lager yeast).